Here is a 284-residue protein sequence, read N- to C-terminus: Asialoglycoprotein receptor 1 (284 aa).

The Cytoplasmic portion of the chain corresponds to 1-39 (MTKDYQDFQHLDNENDHHQLQRGPPPAPRLLQRLCSGFR). An Endocytosis signal motif is present at residues 5-8 (YQDF). Residue Cys-35 is the site of S-palmitoyl cysteine attachment. A helical; Signal-anchor for type II membrane protein transmembrane segment spans residues 40 to 60 (LFLLSLGLSILLLVVVCVITS). A coiled-coil region spans residues 58–122 (ITSQNSQLRE…EDLREDHSRL (65 aa)). Topologically, residues 61–284 (QNSQLREDLR…VCETELGKAN (224 aa)) are extracellular. N-linked (GlcNAc...) asparagine glycans are attached at residues Asn-75, Asn-78, and Asn-146. 3 disulfides stabilise this stretch: Cys-153-Cys-164, Cys-181-Cys-276, and Cys-254-Cys-268. Residues 160-277 (YEGSCYWFSS…CRRPYRWVCE (118 aa)) form the C-type lectin domain. Ca(2+) contacts are provided by Val-190, Glu-196, Asp-215, Gln-239, Asp-241, Asp-242, Glu-252, Asp-253, Asn-264, Asp-265, and Glu-277.

In terms of assembly, interacts with LASS2. Phosphorylated on a cytoplasmic Ser residue. In terms of tissue distribution, expressed exclusively in hepatic parenchymal cells.

It is found in the membrane. Its function is as follows. Mediates the endocytosis of plasma glycoproteins to which the terminal sialic acid residue on their complex carbohydrate moieties has been removed. The receptor recognizes terminal galactose and N-acetylgalactosamine units. After ligand binding to the receptor, the resulting complex is internalized and transported to a sorting organelle, where receptor and ligand are disassociated. The receptor then returns to the cell membrane surface. In Rattus norvegicus (Rat), this protein is Asialoglycoprotein receptor 1 (Asgr1).